A 465-amino-acid chain; its full sequence is 3-isopropylmalate dehydratase large subunit (465 aa).

[4Fe-4S] cluster contacts are provided by Cys347, Cys407, and Cys410. The disordered stretch occupies residues 417–443 (TLKPGERSASTSNRNFEGRQGKGGRTH).

It belongs to the aconitase/IPM isomerase family. LeuC type 1 subfamily. In terms of assembly, heterodimer of LeuC and LeuD. [4Fe-4S] cluster is required as a cofactor.

The enzyme catalyses (2R,3S)-3-isopropylmalate = (2S)-2-isopropylmalate. The protein operates within amino-acid biosynthesis; L-leucine biosynthesis; L-leucine from 3-methyl-2-oxobutanoate: step 2/4. Catalyzes the isomerization between 2-isopropylmalate and 3-isopropylmalate, via the formation of 2-isopropylmaleate. The sequence is that of 3-isopropylmalate dehydratase large subunit from Thermobifida fusca (strain YX).